The chain runs to 140 residues: Small ribosomal subunit protein uS19 (140 aa).

It belongs to the universal ribosomal protein uS19 family.

Protein S19 forms a complex with S13 that binds strongly to the 16S ribosomal RNA. In Sulfolobus acidocaldarius (strain ATCC 33909 / DSM 639 / JCM 8929 / NBRC 15157 / NCIMB 11770), this protein is Small ribosomal subunit protein uS19.